The chain runs to 79 residues: Hematopoietic cell signal transducer (79 aa).

Residues 1-18 form the signal peptide; sequence MVPPGNILFLLLLPVATA. Residues 19–35 lie on the Extracellular side of the membrane; sequence QMTPGSCSGCGPLSLPL. Residues 36-56 traverse the membrane as a helical segment; sequence LAGLVAADAVVSLLIVVVVFV. The Cytoplasmic portion of the chain corresponds to 57–79; that stretch reads CARLRSRPTQEDDKIYINMPGRG. At tyrosine 72 the chain carries Phosphotyrosine. Positions 72-74 are GRB2 binding site; the sequence is YIN. Positions 72-75 are PIK3R1 binding site; that stretch reads YINM.

The protein belongs to the DAP10 family. Homodimer; Disulfide-linked. Heterohexamer composed of four subunits of HCST/DAP10 and two subunits of KLRK1. Interacts (via transmembrane domain) with KLRK1 (via transmembrane domain); the interaction is required for KLRK1 NK cell surface and induces NK cell-mediated cytotoxicity. Interacts with PIK3R1 and GRB2. Interacts with CLEC5A. Forms an CLEC5A/TYROBP/HCST trimolecular complex depending almost solely on TYROBP. Interacts with KLRK1. Interacts with CD300H. In terms of processing, phosphorylated; PIK3R1 and GRB2 associate specifically with tyrosine-phosphorylated HCST. O-glycosylated.

It is found in the membrane. Functionally, transmembrane adapter protein which associates with KLRK1 to form an activation receptor KLRK1-HCST in lymphoid and myeloid cells; this receptor plays a major role in triggering cytotoxicity against target cells expressing cell surface ligands such as MHC class I chain-related MICA and MICB, and UL16-binding proteins (ULBPs); these ligands are up-regulated by stress conditions and pathological state such as viral infection and tumor transformation. Functions as a docking site for PI3-kinase PIK3R1 and GRB2. Interaction of ULBPs with KLRK1-HCST triggers calcium mobilization and activation of the PIK3R1, MAP2K/ERK, and JAK2/STAT5 signaling pathways. Both PIK3R1 and GRB2 are required for full KLRK1-HCST-mediated activation and ultimate killing of target cells. In NK cells, KLRK1-HCST signaling directly induces cytotoxicity and enhances cytokine production initiated via DAP12/TYROBP-associated receptors. In T-cells, it provides primarily costimulation for TCR-induced signals. KLRK1-HCST receptor plays a role in immune surveillance against tumors and is required for cytolysis of tumors cells; indeed, melanoma cells that do not express KLRK1 ligands escape from immune surveillance mediated by NK cells. This Bos taurus (Bovine) protein is Hematopoietic cell signal transducer (HCST).